The sequence spans 372 residues: DNA replication and repair protein RecF (372 aa).

Residue 30-37 (GENGQGKT) coordinates ATP.

Belongs to the RecF family.

It localises to the cytoplasm. The RecF protein is involved in DNA metabolism; it is required for DNA replication and normal SOS inducibility. RecF binds preferentially to single-stranded, linear DNA. It also seems to bind ATP. The protein is DNA replication and repair protein RecF of Anaeromyxobacter dehalogenans (strain 2CP-1 / ATCC BAA-258).